A 1567-amino-acid polypeptide reads, in one-letter code: MASQPPQPPSGQPDTQYEEYQSEVITETTNRPTPAADVYEITPTNDVMDDRYEHEHDDYESGAMYETVRTWSPQSRPELVRIASVFSRIDSHPDVAPTTEDGGQLNRRDTLAGVKIGDPVLDPTKPEFDFYKWARMFTHVMEKEGIKRNRTGVMFRNLTVLGSGSAVQYQDTFLSPFAAPFRPGELCGKGRNPEKVILHDFNGAIREGELLMVLGRPGSGCSTFLKAICGELHGLQKKKESIIHYNGVSQHTFKKELRGEAVYSAEDEHHFPHLTVGQTLEFAAAARTPSKRVLGLSRKDFSTHLARVMMSVFGLSHTYNTKVGDDYVRGVSGGERKRVSIAEIALSGAPICCWDNSTRGLDSATALEFTKALKIGSQVGGITQCLAIYQASQAIYDIFDKVIVLYEGRQIFFGPTRIAKQYFEEMGWYCPPRQTTADFLTSVTNPKERIAKEGYENRVPRTAVEFERYWKQSQNNKLLLANMDRFEAEYPPEEGHLEKLRETHGQAQAKHTASKSPYRISVPMQVKLCTVRAYQRLWGDKSSTIATNISQIMMALIIGSLFFDTPQTTDGFFAKGSVIFFAILLNGLMSITEINGLCKATEPIVPNAQRPIVVKHVNFAFYHAYSEALAGIVADIPIKFLLALVFNIIIYFLGGLERSAAKFFIFFLFTFITILTMSAIFRTLAAATKTIPQALALAGVMILALVIYTGFTLQPSYMHPWFKWILYINPIAYAYEALLVNEVHGNRYRCATPIPPYGSGKNFACAVAGAVPGEMSVSGDAWVESSYDYSYAHIWRNLGILLGFLAFFYFVYLMVSELNLSSASSAEFLVFRRGHLPKNFQGSKDEEAAAGGVMHPNDPARLPPTNTNGAAGETAPGGSTVAVIPPQKDIFTWRNVTYDITIKGEPRRLLDNISGWVRPGTLTALMGVSGAGKTTLLDALAQRTTMGVITGDMLVNGRPLDSSFQRKTGYVQQQDLHLETTTVREALRFSADLRQPKSVSRKEKYEYVEDVIKMLSMEDFSEAVVGNPGEGLNVEQRKLLTIGVELAAKPQLLLFLDEPTSGLDSQSSWSIVTFLRKLADNGQAVLSTIHQPSGILFEQFDRLLFLAKGGRTVYFGDIGKNSETLLNYFETHGAEPCGPSENPAEYMLNIVGAGPSGKSNIDWPVVWKESEESRHVQQELDRIQSETSKRNEGHGQSAEKEPGEFAMPFTSQLYCVTTRVFQQYWRTPSYIWGKLLLGLASALFIGFSFFLQNSSMAGLQNSLFSIFMLTTIFSSLVQQIMPRFVTQRDLFEVRERPSRAYSWKVFLLANIIVEIPYQILLGIIAWASLFYPTFGAHLSSERQGILLLYCVQFFIFASTFAQMIIAGLPDAETAGGIATTMFGLMVTFNGVLQKPNALPGFWRFMWRVSPITYTVGGLAATSLHSREVKCAQNELAIFDPPSGATCAQYLQKLVEAGAPGKLYNPMSTSQCQYCPLSSGDQFLGGSEIHWSDRWRNFGIGWAYIVFNIFATVALYYLIRVRKSSGRPNRIISVITYHLSQFGTYCRAFITGRKEKCPRKREQIGKIY.

Positions 1–11 (MASQPPQPPSG) are enriched in pro residues. Positions 1–37 (MASQPPQPPSGQPDTQYEEYQSEVITETTNRPTPAAD) are disordered. Residues 22–32 (SEVITETTNRP) show a composition bias toward polar residues. N-linked (GlcNAc...) asparagine glycosylation is found at Asn149, Asn157, and Asn356. An ABC transporter 1 domain is found at 167 to 432 (VQYQDTFLSP…FEEMGWYCPP (266 aa)). The next 6 helical transmembrane spans lie at 543–563 (STIA…SLFF), 571–591 (GFFA…LMSI), 636–656 (IPIK…LGGL), 661–681 (AKFF…SAIF), 691–711 (IPQA…YTGF), and 798–818 (LGIL…VSEL). Residues Asn819, Asn895, and Asn912 are each glycosylated (N-linked (GlcNAc...) asparagine). One can recognise an ABC transporter 2 domain in the interval 891 to 1134 (FTWRNVTYDI…LLNYFETHGA (244 aa)). 927–934 (GVSGAGKT) is an ATP binding site. The disordered stretch occupies residues 1172-1202 (ESRHVQQELDRIQSETSKRNEGHGQSAEKEP). The chain crosses the membrane as a helical span at residues 1231-1251 (IWGKLLLGLASALFIGFSFFL). An N-linked (GlcNAc...) asparagine glycan is attached at Asn1253. Transmembrane regions (helical) follow at residues 1257–1277 (AGLQ…SSLV), 1305–1325 (VFLL…GIIA), 1345–1365 (ILLL…QMII), 1372–1392 (ETAG…NGVL), and 1498–1518 (GIGW…YYLI).

It belongs to the ABC transporter superfamily. ABCG family. PDR (TC 3.A.1.205) subfamily.

It is found in the cell membrane. The catalysed reaction is voriconazole(in) + ATP + H2O = voriconazole(out) + ADP + phosphate + H(+). The enzyme catalyses fluconazole(in) + ATP + H2O = fluconazole(out) + ADP + phosphate + H(+). It carries out the reaction (R)-miconazole(in) + ATP + H2O = (R)-miconazole(out) + ADP + phosphate + H(+). It catalyses the reaction (S)-miconazole(in) + ATP + H2O = (S)-miconazole(out) + ADP + phosphate + H(+). Pleiotropic ABC efflux transporter that may be involved in the modulation susceptibility to a wide range of unrelated cytotoxic compounds, including ethidium bromide, ketoconazole, cycloheximide, fluconazole, griseofulvin, imazalil and itraconazole. The chain is ABC multidrug transporter MDR1 from Trichophyton interdigitale (strain MR816).